The primary structure comprises 404 residues: Cytochrome b561 and DOMON domain-containing protein At5g35735 (404 aa).

The first 25 residues, Met1–Gly25, serve as a signal peptide directing secretion. The region spanning Leu49 to Gly164 is the DOMON domain. A Cytochrome b561 domain is found at Val170–Leu369. The disordered stretch occupies residues Ala172 to Lys207. The segment covering Ser173–Ser183 has biased composition (polar residues). Transmembrane regions (helical) follow at residues Thr210–Ala230 and Trp241–Ala261. Residues His211, His245, and His278 each contribute to the heme b site. Residues Asn280–Pro300 form a helical membrane-spanning segment. Residue His314 coordinates heme b. 2 helical membrane-spanning segments follow: residues Thr316–Leu336 and Ile349–Leu369. The segment at Gly376 to Ala404 is disordered. Polar residues predominate over residues Ala380–Ala404.

Requires heme b as cofactor.

Its subcellular location is the membrane. Its function is as follows. May act as a catecholamine-responsive trans-membrane electron transporter. This chain is Cytochrome b561 and DOMON domain-containing protein At5g35735, found in Arabidopsis thaliana (Mouse-ear cress).